The chain runs to 1686 residues: MGQDNSTPISLTLNHWRDVRTRAHNLSVEIKKGKWQTFCSSEWPTFGVGWPPEGTFNLSVIFAVKKIVFQENGGHPDQVPYIVVWQDLAQNPPPWVPASAKVAVVSDTRRPVAGRPSAPPRPPIYPATDDLLLLSEPTPPPYPAALPPPLAPQAIGPPSGQMPDSSDPEGPAAGTRSRRARSPADNSGPDSTVILPLRAIGPPAEPNGLVPLQYWPFSSADLYNWKSNHPSFSENPAGLTGLLESLMFSHQPTWDDCQQLLQILFTTEERERILLEARKNVLGDNGAPTQLENLINEAFPLNRPHWDYNTAAGRERLLVYRRTLVAGLKGAARRPTNLAKVREVLQGPAEPPSVFLERLMEAYRRYTPFDPSSEGQQAAVAMAFIGQSAPDIKKKLQRLEGLQDYSLQDLVKEAEKVYHKRETEEERQEREKKEAEEKERRRDRPKKKNLTKILAAVVSREGSTGRQTGNLSNQAKKTPRDGRPPLDKDQCAYCKEKGHWARECPRKKHVREAKVLALDNXGSQGSDPLPEPRVTLTVEGTPIEFLVDTGAEHSVLTQPMGKVGSRRTVVEGATGSKVYPWTTKRLLKIGHKQVTHSFLVIPECPAPLLGRDLLTKLKAQIQFSAEGPQVTWGERPTMCLVLNLEEEYRLHEKPVPSSIDPSWLQLFPTVWAERAGMGLANQVPPVVVELRSGASPVAVRQYPMSKEAREGIRPHIQKFLDLGVLVPCRSPWNTPLLPVKKPGTNDYRPVQDLREINKRVQDIHPTVPNPYNLLSSLPPSYTWYSVLDLKDAFFCLRLHPNSQPLFAFEWKDPEKGNTGQLTWTRLPQGFKNSPTLFDEALHRDLAPFRALNPQVVLLQYVDDLLVAAPTYEDCKKGTQKLLQELSKLGYRVSAKKAQLCQREVTYLGYLLKEGKRWLTPARKATVMKIPVPTTPRQVREFLGTAGFCRLWIPGFASLAAPLYPLTKESIPFIWTEEHQQAFDHIKKALLSAPALALPDLTKPFTLYIDERAGVARGVLTQTLGPWRRPVAYLSKKLDPVASGWPTCLKAVAAVALLLKDADKLTLGQNVTVIASHSLESIVRQPPDRWMTNARMTHYQSLLLNERVSFAPPAVLNPATLLPVESEATPVHRCSEILAEETGTRRDLEDQPLPGVPTWYTDGSSFITEGKRRAGAPIVDGKRTVWASSLPEGTSAQKAELVALTQALRLAEGKNINIYTDSRYAFATAHIHGAIYKQRGLLTSAGKDIKNKEEILALLEAIHLPRRVAIIHCPGHQRGSNPVATGNRRADEAAKQAALSTRVLAGTTKPQEPIEPAQEKTRPRELTPDRGKEFIKRLHQLTHLGPEKLLQLVNRTSLLIPNLQSAVREVTSQCQACAMTNAVTTYRETGKRQRGDRPGVYWEVDFTEIKPGRYGNKYLLVFIDTFSGWVEAFPTKTETALIVCKKILEEILPRFGIPKVLGSDNGPAFVAQVSQGLATQLGINWKLHCAYRPQSSGQVERMNRTIKETLTKLALETGGKDWVTLLPLALLRARNTPGRFGLTPYEILYGGPPPILESGETLGPDDRFLPVLFTHLKALEIVRTQIWDQIKEVYKPGTVTIPHPFQVGDQVLVRRHRPSSLEPRWKGPYLVLLTTPTAVKVDGIAAWVHASHLKPAPPSAPDESWELEKTDHPLKLRIRRRRDESAK.

Residue G2 is the site of N-myristoyl glycine; by host attachment. Disordered regions lie at residues 110–199 (RPVA…PLRA) and 419–486 (HKRE…RPPL). The short motif at 116 to 119 (PSAP) is the PTAP/PSAP motif element. The span at 137–151 (PTPPPYPAALPPPLA) shows a compositional bias: pro residues. The short motif at 139-142 (PPPY) is the PPXY motif element. The stretch at 407–444 (LQDLVKEAEKVYHKRETEEERQEREKKEAEEKERRRDR) forms a coiled coil. Residues 419 to 442 (HKRETEEERQEREKKEAEEKERRR) show a composition bias toward basic and acidic residues. Over residues 461 to 476 (EGSTGRQTGNLSNQAK) the composition is skewed to polar residues. The segment at 489-506 (DQCAYCKEKGHWARECPR) adopts a CCHC-type zinc-finger fold. A Peptidase A2 domain is found at 543–613 (IEFLVDTGAE…CPAPLLGRDL (71 aa)). The active-site Protease; shared with dimeric partner is the D548. Positions 720–911 (LDLGVLVPCR…REVTYLGYLL (192 aa)) constitute a Reverse transcriptase domain. D788, D862, D863, D1161, E1199, D1220, and D1290 together coordinate Mg(2+). Positions 1152–1298 (LPGVPTWYTD…ADEAAKQAAL (147 aa)) constitute an RNase H type-1 domain. Residues 1304 to 1325 (AGTTKPQEPIEPAQEKTRPREL) form a disordered region. Over residues 1316-1325 (AQEKTRPREL) the composition is skewed to basic and acidic residues. An HHCC-type zinc finger spans residues 1338–1376 (HQLTHLGPEKLLQLVNRTSLLIPNLQSAVREVTSQCQAC). Residues 1393–1551 (RGDRPGVYWE…TPYEILYGGP (159 aa)) form the Integrase catalytic domain. Mg(2+) is bound by residues D1404 and D1463.

Belongs to the retroviral Pol polyprotein family. In terms of assembly, homohexamer; further associates as homomultimer. The virus core is composed of a lattice formed from hexagonal rings, each containing six capsid monomers. As to quaternary structure, interacts (via PPXY motif) with host NEDD4. Interacts (via PSAP motif) with host TSG101. The reverse transcriptase is a monomer (Potential). Interacts (via RNase domains) with host release factor ETF1; this interaction is essential for translational readthrough of amber codon between viral gag and pol genes, as well as for viral replication. In terms of assembly, homodimer. The cofactor is Mg(2+). Specific enzymatic cleavages by the viral protease yield mature proteins. The protease is released by autocatalytic cleavage. The polyprotein is cleaved during and after budding, this process is termed maturation. In terms of processing, phosphorylated on serine residues.

Its subcellular location is the virion. It is found in the host cell membrane. It localises to the host late endosome membrane. The protein localises to the host endosome. The protein resides in the host multivesicular body. Its subcellular location is the host cytoplasm. The catalysed reaction is DNA(n) + a 2'-deoxyribonucleoside 5'-triphosphate = DNA(n+1) + diphosphate. The enzyme catalyses Endonucleolytic cleavage to 5'-phosphomonoester.. Its activity is regulated as follows. Most efficiently inhibited by Amprenavir, which is able to block Gag-Pol processing in infected cells. Functionally, plays a role in budding and is processed by the viral protease during virion maturation outside the cell. During budding, it recruits, in a PPXY-dependent or independent manner, Nedd4-like ubiquitin ligases that conjugate ubiquitin molecules to Gag-Pol, or to Gag-Pol binding host factors. Interaction with HECT ubiquitin ligases probably links the viral protein to the host ESCRT pathway and facilitates release. Targets Gag and gag-pol polyproteins to the plasma membrane via a multipartite membrane binding signal, that includes its myristoylated N-terminus. Also mediates nuclear localization of the pre-integration complex. In terms of biological role, constituent of the pre-integration complex (PIC) which tethers the latter to mitotic chromosomes. This allows the integration of the viral genome into the host DNA. Its function is as follows. Forms the spherical core of the virion that encapsulates the genomic RNA-nucleocapsid complex. Functionally, involved in the packaging and encapsidation of two copies of the genome. Binds with high affinity to conserved UCUG elements within the packaging signal, located near the 5'-end of the genome. This binding is dependent on genome dimerization. Acts as a nucleic acid chaperone which is involved in rearrangement of nucleic acid secondary structures during gRNA retrotranscription. The aspartyl protease mediates proteolytic cleavages of Gag and Gag-Pol polyproteins during or shortly after the release of the virion from the plasma membrane. Cleavages take place as an ordered, step-wise cascade to yield mature proteins. This process is called maturation. Displays maximal activity during the budding process just prior to particle release from the cell. In terms of biological role, RT is a multifunctional enzyme that converts the viral dimeric RNA genome into dsDNA in the cytoplasm, shortly after virus entry into the cell. This enzyme displays a DNA polymerase activity that can copy either DNA or RNA templates, and a ribonuclease H (RNase H) activity that cleaves the RNA strand of RNA-DNA heteroduplexes in a partially processive 3' to 5' endonucleasic mode. Conversion of viral genomic RNA into dsDNA requires many steps. A tRNA binds to the primer-binding site (PBS) situated at the 5' end of the viral RNA. RT uses the 3' end of the tRNA primer to perform a short round of RNA-dependent minus-strand DNA synthesis. The reading proceeds through the U5 region and ends after the repeated (R) region which is present at both ends of viral RNA. The portion of the RNA-DNA heteroduplex is digested by the RNase H, resulting in a ssDNA product attached to the tRNA primer. This ssDNA/tRNA hybridizes with the identical R region situated at the 3' end of viral RNA. This template exchange, known as minus-strand DNA strong stop transfer, can be either intra- or intermolecular. RT uses the 3' end of this newly synthesized short ssDNA to perform the RNA-dependent minus-strand DNA synthesis of the whole template. RNase H digests the RNA template except for a polypurine tract (PPT) situated at the 5' end of the genome. It is not clear if both polymerase and RNase H activities are simultaneous. RNase H probably can proceed both in a polymerase-dependent (RNA cut into small fragments by the same RT performing DNA synthesis) and a polymerase-independent mode (cleavage of remaining RNA fragments by free RTs). Secondly, RT performs DNA-directed plus-strand DNA synthesis using the PPT that has not been removed by RNase H as primers. PPT and tRNA primers are then removed by RNase H. The 3' and 5' ssDNA PBS regions hybridize to form a circular dsDNA intermediate. Strand displacement synthesis by RT to the PBS and PPT ends produces a blunt ended, linear dsDNA copy of the viral genome that includes long terminal repeats (LTRs) at both ends. Its function is as follows. Catalyzes viral DNA integration into the host chromosome, by performing a series of DNA cutting and joining reactions. This enzyme activity takes place after virion entry into a cell and reverse transcription of the RNA genome in dsDNA. The first step in the integration process is 3' processing. This step requires a complex comprising the viral genome, matrix protein and integrase. This complex is called the pre-integration complex (PIC). The integrase protein removes 2 nucleotides from each 3' end of the viral DNA, leaving recessed CA OH's at the 3' ends. In the second step that requires cell division, the PIC enters cell nucleus. In the third step, termed strand transfer, the integrase protein joins the previously processed 3' ends to the 5' ends of strands of target cellular DNA at the site of integration. The last step is viral DNA integration into host chromosome. This Hylobatidae (gibbons) protein is Gag-Pol polyprotein (pol).